The chain runs to 473 residues: Photosystem II CP43 reaction center protein (473 aa).

Residues 1–14 (MKTLYSLRRFYHVE) constitute a propeptide that is removed on maturation. N-acetylthreonine is present on threonine 15. Threonine 15 carries the post-translational modification Phosphothreonine. 5 helical membrane passes run 69–93 (LFEVAHYIPEKPLYEQGLILLPHLA), 134–155 (LIGPDTLEESFPAFGYDWRDKN), 178–200 (KAIYVGGLYDTWAPGGGDVRIID), 255–275 (KPFAWARRAYVWSGEAYLSYS), and 291–312 (WYNNTVYPSEFYGPTGPEASQS). Glutamate 367 is a binding site for [CaMn4O5] cluster. A helical transmembrane segment spans residues 447–471 (RARAAAAGFEKGINRENEPVLTLRP).

Belongs to the PsbB/PsbC family. PsbC subfamily. PSII is composed of 1 copy each of membrane proteins PsbA, PsbB, PsbC, PsbD, PsbE, PsbF, PsbH, PsbI, PsbJ, PsbK, PsbL, PsbM, PsbT, PsbX, PsbY, PsbZ, Psb30/Ycf12, at least 3 peripheral proteins of the oxygen-evolving complex and a large number of cofactors. It forms dimeric complexes. Requires Binds multiple chlorophylls and provides some of the ligands for the Ca-4Mn-5O cluster of the oxygen-evolving complex. It may also provide a ligand for a Cl- that is required for oxygen evolution. PSII binds additional chlorophylls, carotenoids and specific lipids. as cofactor.

It is found in the plastid. The protein localises to the chloroplast thylakoid membrane. One of the components of the core complex of photosystem II (PSII). It binds chlorophyll and helps catalyze the primary light-induced photochemical processes of PSII. PSII is a light-driven water:plastoquinone oxidoreductase, using light energy to abstract electrons from H(2)O, generating O(2) and a proton gradient subsequently used for ATP formation. This is Photosystem II CP43 reaction center protein from Guillardia theta (Cryptophyte).